Reading from the N-terminus, the 174-residue chain is Austinoid biosynthesis clusters protein H (174 aa).

The protein belongs to the trt14 isomerase family. In terms of assembly, homodimer.

It participates in secondary metabolite biosynthesis; terpenoid biosynthesis. Part of the gene cluster B that mediates the biosynthesis of austinol and dehydroaustinol, two fungal meroterpenoids. The first step of the pathway is the synthesis of 3,5-dimethylorsellinic acid by the polyketide synthase ausA. 3,5-dimethylorsellinic acid is then prenylated by the polyprenyl transferase ausN. Further epoxidation by the FAD-dependent monooxygenase ausM and cyclization by the probable terpene cyclase ausL lead to the formation of protoaustinoid A. Protoaustinoid A is then oxidized to spiro-lactone preaustinoid A3 by the combined action of the FAD-binding monooxygenases ausB and ausC, and the dioxygenase ausE. Acid-catalyzed keto-rearrangement and ring contraction of the tetraketide portion of preaustinoid A3 by ausJ lead to the formation of preaustinoid A4. The aldo-keto reductase ausK, with the help of ausH, is involved in the next step by transforming preaustinoid A4 into isoaustinone which is in turn hydroxylated by the P450 monooxygenase ausI to form austinolide. Finally, the cytochrome P450 monooxygenase ausG modifies austinolide to austinol. Austinol can be further modified to dehydroaustinol which forms a diffusible complex with diorcinol that initiates conidiation. Due to genetic rearrangements of the clusters and the subsequent loss of some enzymes, the end products of the Emericella nidulans austinoid biosynthesis clusters are austinol and dehydroaustinol, even if additional enzymes, such as the O-acetyltransferase ausQ and the cytochrome P450 monooxygenase ausR are still functional. This is Austinoid biosynthesis clusters protein H from Emericella nidulans (strain FGSC A4 / ATCC 38163 / CBS 112.46 / NRRL 194 / M139) (Aspergillus nidulans).